A 481-amino-acid chain; its full sequence is Rhamnogalacturonan I rhamnosyltransferase 4 (481 aa).

A helical; Signal-anchor for type II membrane protein transmembrane segment spans residues 33–55; sequence VWFFRVCSCILVWTCLIQLFWHS. 2 N-linked (GlcNAc...) asparagine glycosylation sites follow: asparagine 85 and asparagine 118. 258–260 serves as a coordination point for substrate; sequence HLR. N-linked (GlcNAc...) asparagine glycans are attached at residues asparagine 372 and asparagine 432.

This sequence belongs to the glycosyltransferase GT106 family.

The protein localises to the golgi apparatus membrane. The enzyme catalyses alpha-D-galacturonosyl-[(1-&gt;2)-alpha-L-rhamnosyl-(1-&gt;4)-alpha-D-galacturonosyl](n) + UDP-beta-L-rhamnose = [(1-&gt;2)-alpha-L-rhamnosyl-(1-&gt;4)-alpha-D-galacturonosyl](n+1) + UDP + H(+). It participates in glycan metabolism; pectin biosynthesis. Its function is as follows. Glycosyltransferase involved in the formation of rhamnogalacturonan I (RG-I) oligosaccharides in the seed coat mucilage, which is a specialized cell wall with abundant RG-I. Transfers the rhamnose residue from UDP-beta-L-rhamnose to RG-I oligosaccharides. The polypeptide is Rhamnogalacturonan I rhamnosyltransferase 4 (Arabidopsis thaliana (Mouse-ear cress)).